A 172-amino-acid chain; its full sequence is METPETRFCKESKVVKTSRVFPLDTNNHNTLFGGKLMSYIDDIASISAARHCRRETVTASMDSVDFLKPIGQKDSVCLESYVTWVGTSSMEVFVKVIKEHLMTGERELAATSFLTFVALDSNGKPVPVPRVVPETEEEIMLHNTAVQRANERKNRKRHSQALANALGTDKPW.

One can recognise a HotDog ACOT-type domain in the interval 10 to 122 (KESKVVKTSR…FLTFVALDSN (113 aa)). Residues 148–172 (RANERKNRKRHSQALANALGTDKPW) form a disordered region.

It belongs to the acyl coenzyme A hydrolase family.

This is an uncharacterized protein from Bacillus subtilis (strain 168).